The primary structure comprises 417 residues: Serine--tRNA ligase (417 aa).

Thr-232 to Glu-234 contributes to the L-serine binding site. Residues Arg-263–Glu-265 and Val-279 contribute to the ATP site. L-serine is bound at residue Glu-286. Glu-350–Ser-353 contacts ATP. Ser-385 contributes to the L-serine binding site.

This sequence belongs to the class-II aminoacyl-tRNA synthetase family. Type-1 seryl-tRNA synthetase subfamily. Homodimer. The tRNA molecule binds across the dimer.

It localises to the cytoplasm. The catalysed reaction is tRNA(Ser) + L-serine + ATP = L-seryl-tRNA(Ser) + AMP + diphosphate + H(+). It carries out the reaction tRNA(Sec) + L-serine + ATP = L-seryl-tRNA(Sec) + AMP + diphosphate + H(+). It participates in aminoacyl-tRNA biosynthesis; selenocysteinyl-tRNA(Sec) biosynthesis; L-seryl-tRNA(Sec) from L-serine and tRNA(Sec): step 1/1. Functionally, catalyzes the attachment of serine to tRNA(Ser). Is also able to aminoacylate tRNA(Sec) with serine, to form the misacylated tRNA L-seryl-tRNA(Sec), which will be further converted into selenocysteinyl-tRNA(Sec). This Leptospira interrogans serogroup Icterohaemorrhagiae serovar copenhageni (strain Fiocruz L1-130) protein is Serine--tRNA ligase.